A 380-amino-acid polypeptide reads, in one-letter code: MQSTQSTESNLLPLVPAYDSILALAPYQTGKPIEELTREYGVSDVVKLASNENPIGCSPHVTLAITEQIGQLSRYPDGNGYYLKQALADFNDVNVDQITLGNGSDDLLDILARSFVGADDAIVYSQYAFVVYSMLAKMQGAMDVEVPAQRFGHDLKAMSQAIENNSNTKIVFIANPNNPTGTQLEHGELREFVASVPSSVLVVLDEAYIEYSPESNNRALLDEFDNVVIVRTFSKAYGLAGLRVGYALSSAAVADLLNRIRQPFNVSRVALAAAAAALADQDFIEKTRLINDEQMHWLEKQFDALGLGFIKSHANFIMVEIAVEMEDTNAAVIYQALLEQGVIVRQLEVYGLYNWLRISVGVAEDNMRLIDTLRSILTDD.

Residue lysine 235 is modified to N6-(pyridoxal phosphate)lysine.

It belongs to the class-II pyridoxal-phosphate-dependent aminotransferase family. Histidinol-phosphate aminotransferase subfamily. As to quaternary structure, homodimer. The cofactor is pyridoxal 5'-phosphate.

The catalysed reaction is L-histidinol phosphate + 2-oxoglutarate = 3-(imidazol-4-yl)-2-oxopropyl phosphate + L-glutamate. It participates in amino-acid biosynthesis; L-histidine biosynthesis; L-histidine from 5-phospho-alpha-D-ribose 1-diphosphate: step 7/9. The protein is Histidinol-phosphate aminotransferase 1 of Psychrobacter arcticus (strain DSM 17307 / VKM B-2377 / 273-4).